Reading from the N-terminus, the 431-residue chain is Histidinol dehydrogenase (431 aa).

NAD(+) contacts are provided by Tyr-127, Gln-189, and Asn-212. Positions 237, 259, and 262 each coordinate substrate. The Zn(2+) site is built by Gln-259 and His-262. Residues Glu-326 and His-327 each act as proton acceptor in the active site. Residues His-327, Asp-360, Glu-414, and His-419 each contribute to the substrate site. A Zn(2+)-binding site is contributed by Asp-360. His-419 contributes to the Zn(2+) binding site.

It belongs to the histidinol dehydrogenase family. Zn(2+) serves as cofactor.

It catalyses the reaction L-histidinol + 2 NAD(+) + H2O = L-histidine + 2 NADH + 3 H(+). It functions in the pathway amino-acid biosynthesis; L-histidine biosynthesis; L-histidine from 5-phospho-alpha-D-ribose 1-diphosphate: step 9/9. In terms of biological role, catalyzes the sequential NAD-dependent oxidations of L-histidinol to L-histidinaldehyde and then to L-histidine. This is Histidinol dehydrogenase from Xanthomonas oryzae pv. oryzae (strain KACC10331 / KXO85).